A 149-amino-acid chain; its full sequence is Transcriptional repressor NrdR (149 aa).

The segment at 3–34 is a zinc-finger region; that stretch reads CPFCATDDTKVVDSRLTADGYQIRRRRECPVC. An ATP-cone domain is found at 49-139; that stretch reads PHIVKNNGSR…VYLSFDDVEE (91 aa).

The protein belongs to the NrdR family. The cofactor is Zn(2+).

Negatively regulates transcription of bacterial ribonucleotide reductase nrd genes and operons by binding to NrdR-boxes. The chain is Transcriptional repressor NrdR from Glaesserella parasuis serovar 5 (strain SH0165) (Haemophilus parasuis).